Reading from the N-terminus, the 478-residue chain is Protein trichome birefringence-like 20 (478 aa).

The chain crosses the membrane as a helical; Signal-anchor for type II membrane protein span at residues 10-30 (IGLVIFPLILLTIAPILYLFF). The span at 50–68 (SSAISSPSRYNHSSSSSDS) shows a compositional bias: low complexity. The segment at 50-125 (SSAISSPSRY…KEHRRKKRKR (76 aa)) is disordered. Over residues 92–110 (SSSLHNNDRLSISSSNGHH) the composition is skewed to polar residues. The span at 112-125 (VTPKKEHRRKKRKR) shows a compositional bias: basic residues. The GDS motif motif lies at 200-202 (GDS). Positions 447–461 (DCVHWCLPGPIDSWN) match the DCXHWCLPGXXDXWN motif motif.

It belongs to the PC-esterase family. TBL subfamily.

The protein resides in the membrane. May act as a bridging protein that binds pectin and other cell wall polysaccharides. Probably involved in maintaining esterification of pectins. May be involved in the specific O-acetylation of cell wall polymers. The polypeptide is Protein trichome birefringence-like 20 (TBL20) (Arabidopsis thaliana (Mouse-ear cress)).